A 292-amino-acid chain; its full sequence is Protoheme IX farnesyltransferase (292 aa).

The next 9 membrane-spanning stretches (helical) occupy residues isoleucine 12–serine 32, leucine 43–leucine 63, leucine 94–leucine 114, leucine 115–lysine 135, valine 144–leucine 164, tryptophan 169–methionine 189, isoleucine 216–serine 236, leucine 239–alanine 259, and alanine 267–leucine 287.

Belongs to the UbiA prenyltransferase family. Protoheme IX farnesyltransferase subfamily.

The protein resides in the cell inner membrane. It carries out the reaction heme b + (2E,6E)-farnesyl diphosphate + H2O = Fe(II)-heme o + diphosphate. The protein operates within porphyrin-containing compound metabolism; heme O biosynthesis; heme O from protoheme: step 1/1. In terms of biological role, converts heme B (protoheme IX) to heme O by substitution of the vinyl group on carbon 2 of heme B porphyrin ring with a hydroxyethyl farnesyl side group. The sequence is that of Protoheme IX farnesyltransferase from Solibacter usitatus (strain Ellin6076).